Consider the following 290-residue polypeptide: PIH1 domain-containing protein 1 (290 aa).

3 positions are modified to phosphoserine: Ser12, Ser16, and Ser173.

The protein belongs to the PIH1 family. Component of the R2TP complex composed at least of RUVBL1, RUVBL2, RPAP3 and PIHD1. Component of the PAQosome complex which is responsible for the biogenesis of several protein complexes and which consists of R2TP complex members RUVBL1, RUVBL2, RPAP3 and PIH1D1, URI complex members PFDN2, PFDN6, PDRG1, UXT and URI1 as well as ASDURF, POLR2E and DNAAF10/WDR92. Interacts with phosphorylated TELO2 and mediates interaction of TELO2 with the R2TP complex. Interacts with phosphorylated ECD, EFTUD2/SNRP116, RPB1 and UBR5 and with RPB1 in a phosphorylation-independent manner. Interacts with the core C/D box snoRNP particle components NOP58 and FBL and with RUVBL1/TIP49. Interacts with RPAP3 and DNAAF10. Interacts with histone H4 and with SWI/SNF complex member SMARCB1/SNF5. Interacts with the mTORC1 complex member RPTOR. Interacts with MSL1.

Its subcellular location is the nucleus. Functionally, involved in the assembly of C/D box small nucleolar ribonucleoprotein (snoRNP) particles. Recruits the SWI/SNF complex to the core promoter of rRNA genes and enhances pre-rRNA transcription. Mediates interaction of TELO2 with the R2TP complex which is necessary for the stability of MTOR and SMG1. Positively regulates the assembly and activity of the mTORC1 complex. This chain is PIH1 domain-containing protein 1 (Pih1d1), found in Rattus norvegicus (Rat).